Reading from the N-terminus, the 305-residue chain is Methionyl-tRNA formyltransferase (305 aa).

111-114 (SLLP) is a (6S)-5,6,7,8-tetrahydrofolate binding site.

Belongs to the Fmt family.

It catalyses the reaction L-methionyl-tRNA(fMet) + (6R)-10-formyltetrahydrofolate = N-formyl-L-methionyl-tRNA(fMet) + (6S)-5,6,7,8-tetrahydrofolate + H(+). Functionally, attaches a formyl group to the free amino group of methionyl-tRNA(fMet). The formyl group appears to play a dual role in the initiator identity of N-formylmethionyl-tRNA by promoting its recognition by IF2 and preventing the misappropriation of this tRNA by the elongation apparatus. The protein is Methionyl-tRNA formyltransferase of Campylobacter jejuni subsp. doylei (strain ATCC BAA-1458 / RM4099 / 269.97).